Here is a 139-residue protein sequence, read N- to C-terminus: Gonadotropin subunit beta-2 (139 aa).

The signal sequence occupies residues 1–24 (MFPLVLSLFLGATSDIWPLAPAEA). Intrachain disulfides connect Cys30–Cys78, Cys44–Cys93, Cys47–Cys131, Cys55–Cys109, Cys59–Cys111, and Cys114–Cys121. An N-linked (GlcNAc...) asparagine glycan is attached at Asn34.

The protein belongs to the glycoprotein hormones subunit beta family. Heterodimer of an alpha and a beta chain.

The protein localises to the secreted. In terms of biological role, involved in gametogenesis and steroidogenesis. This Morone saxatilis (Striped bass) protein is Gonadotropin subunit beta-2 (cgbb).